A 220-amino-acid chain; its full sequence is Protein-L-isoaspartate O-methyltransferase (220 aa).

Serine 68 is an active-site residue.

The protein belongs to the methyltransferase superfamily. L-isoaspartyl/D-aspartyl protein methyltransferase family.

The protein resides in the cytoplasm. It catalyses the reaction [protein]-L-isoaspartate + S-adenosyl-L-methionine = [protein]-L-isoaspartate alpha-methyl ester + S-adenosyl-L-homocysteine. Catalyzes the methyl esterification of L-isoaspartyl residues in peptides and proteins that result from spontaneous decomposition of normal L-aspartyl and L-asparaginyl residues. It plays a role in the repair and/or degradation of damaged proteins. The chain is Protein-L-isoaspartate O-methyltransferase from Dictyoglomus turgidum (strain DSM 6724 / Z-1310).